The sequence spans 368 residues: Proton-coupled zinc antiporter SLC30A8 (368 aa).

Residues 1 to 78 (MEFLERTYLV…AKWRLCAASA (78 aa)) are Cytoplasmic-facing. 3 residues coordinate Zn(2+): histidine 51, cysteine 52, and histidine 53. The short motif at 51–53 (HCH) is the HCH Motif; seals regulatory zinc-binding pocket element. A helical transmembrane segment spans residues 79 to 99 (ICFFFMVAEVVGGHVAGSLAV). Topologically, residues 100–102 (LTD) are lumenal, vesicle. Residues 103–123 (AAHLLIDLTSFLLSLFSLWLS) form a helical membrane-spanning segment. Zn(2+) contacts are provided by histidine 105 and aspartate 109. Topologically, residues 124-139 (SRPPSKRLTFGWYRAE) are cytoplasmic. Residues 140-160 (ILGALLSVLCIWVVTGVLVYL) form a helical membrane-spanning segment. Residues 161–174 (ACERLLYPDYQIQA) are Lumenal, vesicle-facing. The chain crosses the membrane as a helical span at residues 175–195 (GIMITVSGCAVAANIVLTLIL). Over 196–216 (HQRHLGHNHKDAQANASVRAA) the chain is Cytoplasmic. A helical transmembrane segment spans residues 217–237 (FVHALGDVFQSTSVLISALII). Residues histidine 219 and aspartate 223 each contribute to the Zn(2+) site. Topologically, residues 238–245 (YFKPDYKM) are lumenal, vesicle. A helical membrane pass occupies residues 246-266 (ADPVCTFISSVLALASTVMIL). The Cytoplasmic portion of the chain corresponds to 267–368 (KDFSILLMEG…SCLLCEDPQD (102 aa)). The Zn(2+) site is built by histidine 300, histidine 317, histidine 344, glutamate 351, cysteine 360, and cysteine 363.

It belongs to the cation diffusion facilitator (CDF) transporter (TC 2.A.4) family. SLC30A subfamily. In terms of assembly, homodimer. In terms of tissue distribution, expressed in endocrine pancreatic islet alpha and beta cells. May be more abundant in beta cells than in alpha cells. Expressed in cubical epithelium lining thyroid follicles (at protein level). In the adrenal gland, detected in the cortex, but not in the medulla (at protein level).

Its subcellular location is the cytoplasmic vesicle. It is found in the secretory vesicle membrane. The protein resides in the cell membrane. The enzyme catalyses Zn(2+)(in) + 2 H(+)(out) = Zn(2+)(out) + 2 H(+)(in). Functionally, proton-coupled zinc ion antiporter mediating the entry of zinc into the lumen of pancreatic beta cell secretory granules, thereby regulating insulin secretion. The sequence is that of Proton-coupled zinc antiporter SLC30A8 from Rattus norvegicus (Rat).